Here is a 454-residue protein sequence, read N- to C-terminus: MEKDTSIPEDLKLAVLEKIKPTEAERKILTAVQEELAAEVKAAAEKLCVADIFVKMVGSAARGTWLSGTHDIDVFISFPEETSREELERRGMEIAREVAKKAEHAEDRHAEHPYLNIVFKGFDVDLVPCFRVESACQLKSAVDRTPFHNEFVKTHIKGREDDVLLMKQFMRGGGVYGSELKTQGFSGYLTELLIIHYGSFENTVKAACLWKPGKKIDIMQHSEMEHTEPLVMVDPTDPKRNVAAALSLDKFCMFMDHCREFMKSPGLNFFFPPPLSPLEDREFLEKLESRKSSQLAIVFKTPDIVDDVLYPQLYKMEQAAAALLHEYDFSVIKTGVWSGKPETVVMLELISGTLPNVKKRIGPPVWVREHAEKFKAKYEGAENVFGGYIEGGKYVFEIQRKYPTAKGLLENQLLNCSLGKQVKSSVSAGFEVIEDAEICRLKDPDFRVFLRKWV.

ATP contacts are provided by serine 59 and arginine 62. 2 residues coordinate CTP: serine 59 and arginine 62. Aspartate 71, aspartate 73, and aspartate 125 together coordinate Mg(2+). ATP contacts are provided by histidine 148, lysine 167, and tyrosine 176. Residues histidine 148, lysine 167, and tyrosine 176 each contribute to the CTP site.

The protein belongs to the tRNA nucleotidyltransferase/poly(A) polymerase family. Archaeal CCA-adding enzyme subfamily. Homodimer. It depends on Mg(2+) as a cofactor.

The catalysed reaction is a tRNA precursor + 2 CTP + ATP = a tRNA with a 3' CCA end + 3 diphosphate. It catalyses the reaction a tRNA with a 3' CCA end + 2 CTP + ATP = a tRNA with a 3' CCACCA end + 3 diphosphate. Its function is as follows. Catalyzes the addition and repair of the essential 3'-terminal CCA sequence in tRNAs without using a nucleic acid template. Adds these three nucleotides in the order of C, C, and A to the tRNA nucleotide-73, using CTP and ATP as substrates and producing inorganic pyrophosphate. tRNA 3'-terminal CCA addition is required both for tRNA processing and repair. Also involved in tRNA surveillance by mediating tandem CCA addition to generate a CCACCA at the 3' terminus of unstable tRNAs. While stable tRNAs receive only 3'-terminal CCA, unstable tRNAs are marked with CCACCA and rapidly degraded. The polypeptide is CCA-adding enzyme (Methanosarcina acetivorans (strain ATCC 35395 / DSM 2834 / JCM 12185 / C2A)).